A 479-amino-acid chain; its full sequence is Transcript termination protein A18 (479 aa).

Residues 99-255 (KNKHKRPTYI…NDIINVSNSL (157 aa)) form the Helicase ATP-binding domain. 112–119 (LACGFGKT) is a binding site for ATP. Positions 205 to 208 (DESH) match the DESH box motif. The Helicase C-terminal domain occupies 308–469 (ILDTIIYDFN…EKKGKKKELA (162 aa)).

The protein belongs to the helicase family. Poxviruses subfamily. In terms of assembly, interacts with G2. Might be part of a transcription complex composed at least of G2, A18, and H5.

It is found in the virion. Its function is as follows. DNA helicase which seems to act as a postreplicative transcription termination factor. Involved in ATP-dependent release of nascent RNA. Forms a stable complex with single-stranded DNA, and to a lesser extent RNA. The protein is Transcript termination protein A18 of Homo sapiens (Human).